Consider the following 191-residue polypeptide: Protein GrpE (191 aa).

The segment covering M1–A10 has biased composition (basic and acidic residues). A disordered region spans residues M1–V28.

It belongs to the GrpE family. In terms of assembly, homodimer.

It is found in the cytoplasm. Participates actively in the response to hyperosmotic and heat shock by preventing the aggregation of stress-denatured proteins, in association with DnaK and GrpE. It is the nucleotide exchange factor for DnaK and may function as a thermosensor. Unfolded proteins bind initially to DnaJ; upon interaction with the DnaJ-bound protein, DnaK hydrolyzes its bound ATP, resulting in the formation of a stable complex. GrpE releases ADP from DnaK; ATP binding to DnaK triggers the release of the substrate protein, thus completing the reaction cycle. Several rounds of ATP-dependent interactions between DnaJ, DnaK and GrpE are required for fully efficient folding. This chain is Protein GrpE, found in Aeromonas hydrophila subsp. hydrophila (strain ATCC 7966 / DSM 30187 / BCRC 13018 / CCUG 14551 / JCM 1027 / KCTC 2358 / NCIMB 9240 / NCTC 8049).